A 120-amino-acid polypeptide reads, in one-letter code: Large ribosomal subunit protein uL14 (120 aa).

The protein belongs to the universal ribosomal protein uL14 family. As to quaternary structure, part of the 50S ribosomal subunit. Forms a cluster with proteins L3 and L19. In the 70S ribosome, L14 and L19 interact and together make contacts with the 16S rRNA in bridges B5 and B8.

Functionally, binds to 23S rRNA. Forms part of two intersubunit bridges in the 70S ribosome. The sequence is that of Large ribosomal subunit protein uL14 from Phytoplasma australiense.